A 782-amino-acid chain; its full sequence is MVDSESQNDFANDGDNDSYFVSTQFESKQEEIMEKELQKLQTGQTVSQLLRFRSGISGLTSVTPKPVKVSRPGLRKTGSRKSKKNQSMSAMVKERFKTDKYAYFSGDQRKIDEFLRRLEGSEDIENMAMSTSGKDGSCLFTRDEWICIVQSIKLRFPELSTTKKKSLSAITRQINKQEKENEDENSIWSQARSLPSLELTDEDLKWLYDLDDEQMANRTITSSMTEVDGNDDHSPFVMTLSQTTPSQLSHIKESDSLYSQETNVQTTEPADHQSGHMQRCHSQTAEGKTQSKILEIEIVSDSEEEIESLIRNTEPDSSEDVYGANEVSSHQVPAVDALASFQSFPFAADMIPRNNVRDKEHESLHISSSIRSSPAQSLTQSQVPSSIDSIIEPPCESPRKMSPIRDTQPEPVITSPFKTPTKKSKELLSKYSSPVKNSIHNNMGSPVAMMVPRSSESAKHVEEIIVSSDEESVYSTAKSVFPSAQIVISEVEDEDEEFYEIVSSIPEKHKPTAAAKKRKLLQTSRYEVVSNFNINDYDDDQRGFKLRKLETKPIIIDSDNEIADSEEDEKNLSIIEITREVEAEESEHDTEYLINLGKQVEGNSKMNTSVLQVPSSPSSITFGRTDILKELEAFSNSDLDTDRTINSNTSKNSNAIKSGTNQTIDFTLLSTKELQERFKKWELKPVQGRQRMVSVLSEVSKLFTNSFNDPVPETRQGFEGTVYGSLNRLVGSNQYWHEKIISFEPLRVSELRDWICTKGYELEEDFLMRYCDDNGYCCTRQP.

Disordered stretches follow at residues 63–91 and 359–425; these read TPKP…MSAM and KEHE…KKSK. The segment covering 73 to 84 has biased composition (basic residues); it reads GLRKTGSRKSKK. Polar residues predominate over residues 374–388; sequence PAQSLTQSQVPSSID.

This sequence belongs to the SLX4 family. Forms a heterodimer with SLX1. Post-translationally, phosphorylated in response to DNA damage.

The protein resides in the nucleus. Its function is as follows. Regulatory subunit of the SLX1-SLX4 structure-specific endonuclease that resolves DNA secondary structures generated during DNA repair and recombination. Has endonuclease activity towards branched DNA substrates, introducing single-strand cuts in duplex DNA close to junctions with ss-DNA. The polypeptide is Structure-specific endonuclease subunit SLX4 (Scheffersomyces stipitis (strain ATCC 58785 / CBS 6054 / NBRC 10063 / NRRL Y-11545) (Yeast)).